The sequence spans 463 residues: Glutamate--tRNA ligase 1 (463 aa).

A 'HIGH' region motif is present at residues 10 to 20 (PSPTGYLHIGG). The short motif at 238–242 (KLSKR) is the 'KMSKS' region element. An ATP-binding site is contributed by Lys-241.

The protein belongs to the class-I aminoacyl-tRNA synthetase family. Glutamate--tRNA ligase type 1 subfamily. As to quaternary structure, monomer.

Its subcellular location is the cytoplasm. The catalysed reaction is tRNA(Glu) + L-glutamate + ATP = L-glutamyl-tRNA(Glu) + AMP + diphosphate. Its function is as follows. Catalyzes the attachment of glutamate to tRNA(Glu) in a two-step reaction: glutamate is first activated by ATP to form Glu-AMP and then transferred to the acceptor end of tRNA(Glu). This is Glutamate--tRNA ligase 1 from Helicobacter pylori (strain G27).